Here is a 955-residue protein sequence, read N- to C-terminus: GPI inositol-deacylase B (955 aa).

A glycan (N-linked (GlcNAc...) asparagine) is linked at asparagine 7. The helical transmembrane segment at 8–28 (ASVALWTVFTILTIWISFALH) threads the bilayer. The active site involves serine 180. A glycan (N-linked (GlcNAc...) asparagine) is linked at asparagine 431. 4 consecutive transmembrane segments (helical) span residues 489 to 509 (IAFPALTSGLISYKVLTSGGV), 600 to 620 (LLFSLPTAVLYAVLLLQFWRY), 643 to 663 (YLSWACLVVAGLSFVIKFEFI), and 703 to 723 (PIGVVLAPAFLALATGIVVVV). An N-linked (GlcNAc...) asparagine glycan is attached at asparagine 753. 3 helical membrane-spanning segments follow: residues 772–792 (VIIALMALLVLLFVPYQLAFA), 840–860 (TMSVVMVWTTLVNIPVLAVWV), and 870–890 (IFSSHHNLLSVLPTLLFIENL). Asparagine 914 carries N-linked (GlcNAc...) asparagine glycosylation. The chain crosses the membrane as a helical span at residues 919–939 (GMMHAFMIHHWFNLLAGWLLI). The N-linked (GlcNAc...) asparagine glycan is linked to asparagine 945.

This sequence belongs to the GPI inositol-deacylase family.

It is found in the endoplasmic reticulum membrane. In terms of biological role, involved in inositol deacylation of GPI-anchored proteins which plays important roles in the quality control and ER-associated degradation of GPI-anchored proteins. The protein is GPI inositol-deacylase B (BST1B) of Yarrowia lipolytica (strain CLIB 122 / E 150) (Yeast).